Here is a 361-residue protein sequence, read N- to C-terminus: tRNA-specific 2-thiouridylase MnmA (361 aa).

ATP-binding positions include 10–17 and Met36; that span reads GMSGGVDS. Catalysis depends on Cys104, which acts as the Nucleophile. Cys104 and Cys202 are oxidised to a cystine. Gly128 is a binding site for ATP. The tract at residues 152–154 is interaction with tRNA; sequence KDQ. Cys202 serves as the catalytic Cysteine persulfide intermediate. An interaction with tRNA region spans residues 308–309; it reads RY.

Belongs to the MnmA/TRMU family.

The protein resides in the cytoplasm. The enzyme catalyses S-sulfanyl-L-cysteinyl-[protein] + uridine(34) in tRNA + AH2 + ATP = 2-thiouridine(34) in tRNA + L-cysteinyl-[protein] + A + AMP + diphosphate + H(+). Catalyzes the 2-thiolation of uridine at the wobble position (U34) of tRNA, leading to the formation of s(2)U34. This is tRNA-specific 2-thiouridylase MnmA from Clostridioides difficile (strain 630) (Peptoclostridium difficile).